We begin with the raw amino-acid sequence, 51 residues long: Large ribosomal subunit protein eL39 (51 aa).

Residues 1 to 15 show a composition bias toward basic residues; sequence MPSHKSFRTKQKLAK. The segment at 1–21 is disordered; sequence MPSHKSFRTKQKLAKAARQNR.

It belongs to the eukaryotic ribosomal protein eL39 family. Component of the large ribosomal subunit (LSU). Mature yeast ribosomes consist of a small (40S) and a large (60S) subunit. The 40S small subunit contains 1 molecule of ribosomal RNA (18S rRNA) and at least 33 different proteins. The large 60S subunit contains 3 rRNA molecules (25S, 5.8S and 5S rRNA) and at least 46 different proteins. eL39 interacts with yih1.

Its subcellular location is the cytoplasm. Its function is as follows. Component of the ribosome, a large ribonucleoprotein complex responsible for the synthesis of proteins in the cell. The small ribosomal subunit (SSU) binds messenger RNAs (mRNAs) and translates the encoded message by selecting cognate aminoacyl-transfer RNA (tRNA) molecules. The large subunit (LSU) contains the ribosomal catalytic site termed the peptidyl transferase center (PTC), which catalyzes the formation of peptide bonds, thereby polymerizing the amino acids delivered by tRNAs into a polypeptide chain. The nascent polypeptides leave the ribosome through a tunnel in the LSU and interact with protein factors that function in enzymatic processing, targeting, and the membrane insertion of nascent chains at the exit of the ribosomal tunnel. The sequence is that of Large ribosomal subunit protein eL39 (rpl39) from Schizosaccharomyces pombe (strain 972 / ATCC 24843) (Fission yeast).